The sequence spans 89 residues: U-scoloptoxin(11)-Sm4a (89 aa).

A signal peptide spans 1-17 (MFFKLVLVSAVAIQALS).

Belongs to the scoloptoxin-11 family. In terms of processing, contains 3 disulfide bonds. Expressed by the venom gland.

It localises to the secreted. This chain is U-scoloptoxin(11)-Sm4a, found in Scolopendra morsitans (Tanzanian blue ringleg centipede).